Reading from the N-terminus, the 631-residue chain is Chaperone protein HtpG (631 aa).

Residues 1–338 (MILKEQETLG…CNDLPLNISR (338 aa)) are a; substrate-binding. Residues 339–554 (EMLQHNRITQ…SNNMTTHMAK (216 aa)) are b. Positions 555–631 (LIVASGQNKP…KLLNHDTIVN (77 aa)) are c.

It belongs to the heat shock protein 90 family. In terms of assembly, homodimer.

It localises to the cytoplasm. In terms of biological role, molecular chaperone. Has ATPase activity. The chain is Chaperone protein HtpG from Baumannia cicadellinicola subsp. Homalodisca coagulata.